The following is a 324-amino-acid chain: UPF0158 protein CPn_0518/CP_0235/CPj0518/CpB0539 (324 aa).

It belongs to the UPF0158 family.

This is UPF0158 protein CPn_0518/CP_0235/CPj0518/CpB0539 from Chlamydia pneumoniae (Chlamydophila pneumoniae).